Reading from the N-terminus, the 442-residue chain is D-inositol 3-phosphate glycosyltransferase (442 aa).

1D-myo-inositol 3-phosphate is bound at residue His-15. Residues Gln-21–Pro-22 and Gly-29 contribute to the UDP-N-acetyl-alpha-D-glucosamine site. Residues Asp-26–Asn-31, Lys-84, Tyr-117, Thr-141, and Arg-161 contribute to the 1D-myo-inositol 3-phosphate site. UDP-N-acetyl-alpha-D-glucosamine contacts are provided by Arg-235, Lys-240, and Gln-299. Residues Tyr-308, Arg-309, and Ser-311 each coordinate Mg(2+). Residues Glu-321 and Glu-329 each contribute to the UDP-N-acetyl-alpha-D-glucosamine site. Thr-335 contributes to the Mg(2+) binding site.

The protein belongs to the glycosyltransferase group 1 family. MshA subfamily. In terms of assembly, homodimer.

It catalyses the reaction 1D-myo-inositol 3-phosphate + UDP-N-acetyl-alpha-D-glucosamine = 1D-myo-inositol 2-acetamido-2-deoxy-alpha-D-glucopyranoside 3-phosphate + UDP + H(+). Its function is as follows. Catalyzes the transfer of a N-acetyl-glucosamine moiety to 1D-myo-inositol 3-phosphate to produce 1D-myo-inositol 2-acetamido-2-deoxy-glucopyranoside 3-phosphate in the mycothiol biosynthesis pathway. The polypeptide is D-inositol 3-phosphate glycosyltransferase (Rhodococcus erythropolis (strain PR4 / NBRC 100887)).